We begin with the raw amino-acid sequence, 173 residues long: Putative metal-dependent hydrolase BCE33L2441 (173 aa).

Zn(2+) is bound by residues H65, H156, and H160.

The protein belongs to the metal hydrolase YfiT family. As to quaternary structure, homodimer. Zn(2+) serves as cofactor.

The protein localises to the cytoplasm. Possible metal-dependent hydrolase. In Bacillus cereus (strain ZK / E33L), this protein is Putative metal-dependent hydrolase BCE33L2441.